Consider the following 85-residue polypeptide: U4-theraphotoxin-Hhn1ad (85 aa).

Residues 1 to 22 form the signal peptide; sequence MKVTLIAILTCAAVLVLHTTAA. A propeptide spanning residues 23–48 is cleaved from the precursor; that stretch reads EELKTESQLMEVGMPDTELATVDEER. Cystine bridges form between C52/C66, C56/C77, and C71/C82.

Belongs to the neurotoxin 12 (Hwtx-2) family. 02 (Hwtx-2) subfamily. Expressed by the venom gland.

It localises to the secreted. Postsynaptic neurotoxin. The chain is U4-theraphotoxin-Hhn1ad from Cyriopagopus hainanus (Chinese bird spider).